A 262-amino-acid chain; its full sequence is Transmembrane protein 106A (262 aa).

The helical transmembrane segment at 95 to 115 threads the bilayer; sequence FVFLAVLICLVTSSFIVFFLF.

It belongs to the TMEM106 family. In terms of tissue distribution, expressed in renal cells (at protein level). Expressed in epithelial cells.

The protein resides in the cell membrane. In terms of biological role, activates macrophages and polarizes them into M1-like macrophages through the activation of the MAPK and NF-kappaB signaling pathway. Upon activation, up-regulates the expression of CD80, CD86, CD69 and MHC II on macrophages, and induces the release of pro-inflammatory cytokines such as TNF, IL1B, IL6, CCL2 and nitric oxide. May play a role in inhibition of proliferation and migration. The sequence is that of Transmembrane protein 106A (TMEM106A) from Homo sapiens (Human).